The sequence spans 71 residues: Translation initiation factor IF-1 (71 aa).

The S1-like domain maps to 1 to 71 (MSKDDLIQFT…LTKGRVIHRH (71 aa)).

Belongs to the IF-1 family. In terms of assembly, component of the 30S ribosomal translation pre-initiation complex which assembles on the 30S ribosome in the order IF-2 and IF-3, IF-1 and N-formylmethionyl-tRNA(fMet); mRNA recruitment can occur at any time during PIC assembly.

Its subcellular location is the cytoplasm. Functionally, one of the essential components for the initiation of protein synthesis. Stabilizes the binding of IF-2 and IF-3 on the 30S subunit to which N-formylmethionyl-tRNA(fMet) subsequently binds. Helps modulate mRNA selection, yielding the 30S pre-initiation complex (PIC). Upon addition of the 50S ribosomal subunit IF-1, IF-2 and IF-3 are released leaving the mature 70S translation initiation complex. This chain is Translation initiation factor IF-1, found in Rickettsia typhi (strain ATCC VR-144 / Wilmington).